A 155-amino-acid chain; its full sequence is Probable calcium-binding protein CML44 (155 aa).

EF-hand domains are found at residues 6–41 (ITTN…LGWA), 85–120 (DNDE…LGFE), and 130–155 (RMIR…ILHV). Ca(2+) contacts are provided by D19, N21, D23, E30, D98, N100, D102, Y104, and E109.

Functionally, potential calcium sensor. The protein is Probable calcium-binding protein CML44 (CML44) of Arabidopsis thaliana (Mouse-ear cress).